The following is a 348-amino-acid chain: Probable dual-specificity RNA methyltransferase RlmN (348 aa).

Glu93 acts as the Proton acceptor in catalysis. Positions 99 to 333 (TEKRLTACLS…VSLRKSRGSD (235 aa)) constitute a Radical SAM core domain. A disulfide bridge connects residues Cys106 and Cys338. Cys113, Cys117, and Cys120 together coordinate [4Fe-4S] cluster. Residues 160–161 (GE), Ser190, 219–221 (SLH), and Asn295 each bind S-adenosyl-L-methionine. Cys338 serves as the catalytic S-methylcysteine intermediate.

It belongs to the radical SAM superfamily. RlmN family. Requires [4Fe-4S] cluster as cofactor.

The protein localises to the cytoplasm. The enzyme catalyses adenosine(2503) in 23S rRNA + 2 reduced [2Fe-2S]-[ferredoxin] + 2 S-adenosyl-L-methionine = 2-methyladenosine(2503) in 23S rRNA + 5'-deoxyadenosine + L-methionine + 2 oxidized [2Fe-2S]-[ferredoxin] + S-adenosyl-L-homocysteine. It catalyses the reaction adenosine(37) in tRNA + 2 reduced [2Fe-2S]-[ferredoxin] + 2 S-adenosyl-L-methionine = 2-methyladenosine(37) in tRNA + 5'-deoxyadenosine + L-methionine + 2 oxidized [2Fe-2S]-[ferredoxin] + S-adenosyl-L-homocysteine. Specifically methylates position 2 of adenine 2503 in 23S rRNA and position 2 of adenine 37 in tRNAs. This Prochlorococcus marinus (strain MIT 9515) protein is Probable dual-specificity RNA methyltransferase RlmN.